The following is a 932-amino-acid chain: UPF0182 protein Syncc9902_1151 (932 aa).

Helical transmembrane passes span 4 to 24, 40 to 60, 85 to 105, 124 to 144, 151 to 171, 201 to 221, 243 to 263, 293 to 313, and 315 to 335; these read FLWI…VEWV, MLQL…VLWL, VLMV…DLAI, MASE…VSLC, WVAV…WGVW, IQLG…HAVW, YRWL…LVWL, LLAF…IGHL, and RLLL…TPLT.

It belongs to the UPF0182 family.

Its subcellular location is the cell membrane. This is UPF0182 protein Syncc9902_1151 from Synechococcus sp. (strain CC9902).